Reading from the N-terminus, the 671-residue chain is Synaptotagmin-like protein 4 (671 aa).

In terms of domain architecture, RabBD spans 4–122; sequence LLDLSFLSEE…KATGDWFYDQ (119 aa). An FYVE-type zinc finger spans residues 63-105; that stretch reads CARCQESLGRLSPKTNTCRGCNHLVCRDCRIQESNGTWRCKVC. The interval 199 to 243 is disordered; that stretch reads SESLDSFTADSDSTSRRDSLDKSGLFPEWKKMSAPKSQVEKETQP. Phosphoserine occurs at positions 201, 204, 217, 221, 274, and 289. The region spanning 356–478 is the C2 1 domain; sequence VTGRIAFSLK…KLDKKLDHCL (123 aa). Position 488 is a phosphoserine (S488). The C2 2 domain occupies 507 to 633; the sequence is PASKTPVGGD…ISNGEVVDWM (127 aa).

In terms of assembly, part of a ternary complex containing STX1A and RAB27A. Can bind both dominant negative and dominant active mutants of RAB27A. Binds STXBP1, RAB3A, RAB8A and RAB27B. Interacts with MYO5A.

It is found in the membrane. It localises to the cell membrane. The protein resides in the cytoplasmic vesicle. Its subcellular location is the secretory vesicle membrane. In terms of biological role, modulates exocytosis of dense-core granules and secretion of hormones in the pancreas and the pituitary. Interacts with vesicles containing negatively charged phospholipids in a Ca(2+)-independent manner. The polypeptide is Synaptotagmin-like protein 4 (SYTL4) (Homo sapiens (Human)).